We begin with the raw amino-acid sequence, 440 residues long: Thymidine phosphorylase (440 aa).

It belongs to the thymidine/pyrimidine-nucleoside phosphorylase family. In terms of assembly, homodimer.

The catalysed reaction is thymidine + phosphate = 2-deoxy-alpha-D-ribose 1-phosphate + thymine. It functions in the pathway pyrimidine metabolism; dTMP biosynthesis via salvage pathway; dTMP from thymine: step 1/2. Functionally, the enzymes which catalyze the reversible phosphorolysis of pyrimidine nucleosides are involved in the degradation of these compounds and in their utilization as carbon and energy sources, or in the rescue of pyrimidine bases for nucleotide synthesis. This Cronobacter sakazakii (strain ATCC BAA-894) (Enterobacter sakazakii) protein is Thymidine phosphorylase.